The following is a 378-amino-acid chain: 3-dehydroquinate synthase (378 aa).

Residues 111–115 (GVIGD), 135–136 (TS), K148, and K157 each bind NAD(+). Zn(2+) contacts are provided by E190, H252, and H271.

It belongs to the sugar phosphate cyclases superfamily. Dehydroquinate synthase family. NAD(+) serves as cofactor. It depends on Co(2+) as a cofactor. The cofactor is Zn(2+).

It localises to the cytoplasm. The enzyme catalyses 7-phospho-2-dehydro-3-deoxy-D-arabino-heptonate = 3-dehydroquinate + phosphate. The protein operates within metabolic intermediate biosynthesis; chorismate biosynthesis; chorismate from D-erythrose 4-phosphate and phosphoenolpyruvate: step 2/7. Functionally, catalyzes the conversion of 3-deoxy-D-arabino-heptulosonate 7-phosphate (DAHP) to dehydroquinate (DHQ). The protein is 3-dehydroquinate synthase of Mesorhizobium japonicum (strain LMG 29417 / CECT 9101 / MAFF 303099) (Mesorhizobium loti (strain MAFF 303099)).